Here is a 276-residue protein sequence, read N- to C-terminus: Protein MGF 360-15R (276 aa).

This sequence belongs to the asfivirus MGF 360 family.

In terms of biological role, plays a role in virus cell tropism, and may be required for efficient virus replication in macrophages. The polypeptide is Protein MGF 360-15R (African swine fever virus (isolate Tick/South Africa/Pretoriuskop Pr4/1996) (ASFV)).